Consider the following 343-residue polypeptide: Ubiquitin thioesterase OTU1 (343 aa).

The segment at R45 to K123 is UBX-like. Residues L144 to N269 enclose the OTU domain. The cys-loop stretch occupies residues V149 to C155. Residue D152 is part of the active site. C155 (nucleophile) is an active-site residue. The variable-loop stretch occupies residues I208–I218. The his-loop stretch occupies residues Y258–H262. I261 contacts substrate. H262 is an active-site residue. Positions D286 to Q291 are S2 site. A C2H2-type zinc finger spans residues L313–H337. The active site involves H337.

As to quaternary structure, interacts with VCP; the interaction is direct. Interacts with FAF2/UBXD8. Interacts with DERL1; however interaction is dependent on the UBAX-like region, suggesting that it may be indirect. Interacts with PLAA, UBXN6 and VCP; may form a complex involved in macroautophagy.

Its subcellular location is the cytoplasm. The catalysed reaction is Thiol-dependent hydrolysis of ester, thioester, amide, peptide and isopeptide bonds formed by the C-terminal Gly of ubiquitin (a 76-residue protein attached to proteins as an intracellular targeting signal).. Hydrolase that can remove conjugated ubiquitin from proteins and participates in endoplasmic reticulum-associated degradation (ERAD) for misfolded lumenal proteins. May act by triming the ubiquitin chain on the associated substrate to facilitate their threading through the VCP/p97 pore. Ubiquitin moieties on substrates may present a steric impediment to the threading process when the substrate is transferred to the VCP pore and threaded through VCP's axial channel. Mediates deubiquitination of 'Lys-27'-, 'Lys-29'- and 'Lys-33'-linked polyubiquitin chains. Also able to hydrolyze 'Lys-11'-linked ubiquitin chains. Cleaves both polyubiquitin and di-ubiquitin. May play a role in macroautophagy, regulating for instance the clearance of damaged lysosomes. May recruit PLAA, UBXN6 and VCP to damaged lysosome membranes decorated with K48-linked ubiquitin chains and remove these chains allowing autophagosome formation. This Rattus norvegicus (Rat) protein is Ubiquitin thioesterase OTU1 (Yod1).